The primary structure comprises 851 residues: Thrombospondin type-1 domain-containing protein 1 (851 aa).

A signal peptide spans 1-24 (MKPMLKDFSNLLLVVLCDYVLGEA). At 25-412 (EYLLLQEPVH…SPQDPVKSNN (388 aa)) the chain is on the extracellular side. Residues Asn-53, Asn-58, Asn-69, Asn-110, Asn-135, and Asn-304 are each glycosylated (N-linked (GlcNAc...) asparagine). The TSP type-1 domain maps to 339 to 392 (IETWGPWQPWSPCSTTCGDAVRERRRLCVTSFPSRPSCSGMSSETSPCSLEECA). 3 cysteine pairs are disulfide-bonded: Cys-351/Cys-386, Cys-355/Cys-391, and Cys-366/Cys-376. Residues 413-433 (VVTVTGISLCLFIIFATVLIT) traverse the membrane as a helical segment. Residues 434 to 851 (LWRRFGRAPK…STLSVEKLVI (418 aa)) lie on the Cytoplasmic side of the membrane. Residue Ser-462 is modified to Phosphoserine. Disordered stretches follow at residues 471 to 516 (SEPR…ESFQ), 626 to 646 (KSQIRSTGGRDGSSERCHSRS), and 682 to 777 (SRMR…SSPI). Basic and acidic residues predominate over residues 685–695 (RTWDQMEDRCR). Residues 765–776 (SHRSASRKQSSP) show a composition bias toward polar residues.

Part of a complex composed of THSD1, PTK2/FAK1, TLN1 and VCL. Interacts with TLN1. In terms of tissue distribution, expressed in cerebral vascular endothelium.

It is found in the endosome membrane. Its subcellular location is the cell junction. The protein resides in the focal adhesion. Is a positive regulator of nascent focal adhesion assembly, involved in the modulation of endothelial cell attachment to the extracellular matrix. This Mus musculus (Mouse) protein is Thrombospondin type-1 domain-containing protein 1 (Thsd1).